The following is a 917-amino-acid chain: Alanine--tRNA ligase (917 aa).

Zn(2+) contacts are provided by histidine 615, histidine 619, cysteine 719, and histidine 723.

This sequence belongs to the class-II aminoacyl-tRNA synthetase family. Zn(2+) is required as a cofactor.

Its subcellular location is the cytoplasm. The enzyme catalyses tRNA(Ala) + L-alanine + ATP = L-alanyl-tRNA(Ala) + AMP + diphosphate. In terms of biological role, catalyzes the attachment of alanine to tRNA(Ala) in a two-step reaction: alanine is first activated by ATP to form Ala-AMP and then transferred to the acceptor end of tRNA(Ala). Also edits incorrectly charged Ser-tRNA(Ala) and Gly-tRNA(Ala) via its editing domain. This is Alanine--tRNA ligase from Thermococcus kodakarensis (strain ATCC BAA-918 / JCM 12380 / KOD1) (Pyrococcus kodakaraensis (strain KOD1)).